A 435-amino-acid polypeptide reads, in one-letter code: NADH-quinone oxidoreductase subunit D (435 aa).

The protein belongs to the complex I 49 kDa subunit family. In terms of assembly, NDH-1 is composed of 14 different subunits. Subunits NuoB, C, D, E, F, and G constitute the peripheral sector of the complex.

The protein localises to the cell inner membrane. The catalysed reaction is a quinone + NADH + 5 H(+)(in) = a quinol + NAD(+) + 4 H(+)(out). In terms of biological role, NDH-1 shuttles electrons from NADH, via FMN and iron-sulfur (Fe-S) centers, to quinones in the respiratory chain. The immediate electron acceptor for the enzyme in this species is believed to be ubiquinone. Couples the redox reaction to proton translocation (for every two electrons transferred, four hydrogen ions are translocated across the cytoplasmic membrane), and thus conserves the redox energy in a proton gradient. This is NADH-quinone oxidoreductase subunit D from Xylella fastidiosa (strain M23).